Consider the following 832-residue polypeptide: Protein PPP4R3C (832 aa).

Positions 708-832 are disordered; sequence RTQEGEAVMP…SPKKKPHLSS (125 aa). Composition is skewed to basic and acidic residues over residues 725–735 and 749–765; these read FTETKRTHQEG and METK…DSPK. Residues 769 to 779 are compositionally biased toward low complexity; that stretch reads SGDFKFSSSYS. The segment covering 801 to 820 has biased composition (acidic residues); it reads PDDEEEKEEDEEEKEEDKED.

This sequence belongs to the SMEK family.

This is Protein PPP4R3C from Homo sapiens (Human).